A 557-amino-acid polypeptide reads, in one-letter code: MAALTQNPQFKKLKTWYEQHGSDLNLRRLFEGDRDRFNRFSLNLNTNHGHILVDYSKNLVTETVMQMLVDVAKSRGVEAARERMFTGEKINFTEDRAVLHVALRNRSNAPILVDGKDVMPEVNRVLEKMKSFCQRVRSGEWKGYSGKAITDVINIGIGGSDLGPLMVTEALKPYSSEGPRVWFVSNIDGTHIAKTLATLNPESSLFIIASKTFTTQETITNAETAKEWFLLSAKDPSAVAKHFVALSTNTAKVKEFGIDPQNMFEFWDWVGGRYSLWSAIGLSIALHVGFDNFEQLLSGAHWMDQHFRTTPLEKNAPVLLALLGIWYINCFGCETHAMLPYDQYLHRFAAYFQQGDMESNGKYITKSGTRVNYQTGPIVWGEPGTNGQHAFYQLIHQGTKMIPCDFLIPVQSQHPIRNGLHHKILLANFLAQTEALMRGKSTEEARKELQAAGRSPEDFEKLLPHKVFEGNRPTNSIVFTKLTPFILGALIAMYEHKIFVQGIIWDINSFDQWGVELGKQLAKKIEPELDGSSPVTSHDSSTNGLINFIKQEREARS.

Residue A2 is modified to N-acetylalanine. K12 is subject to N6-acetyllysine. At S107 the chain carries Phosphoserine. K142 is subject to N6-acetyllysine. Residue G159–S160 participates in D-glucose 6-phosphate binding. S185 is subject to Phosphoserine; by CK2. S210 to T215 contributes to the D-glucose 6-phosphate binding site. T250 is modified (phosphothreonine). D-glucose 6-phosphate-binding residues include Q354, E358, and H389. E358 acts as the Proton donor in catalysis. H389 is a catalytic residue. Phosphoserine is present on S455. K519 provides a ligand contact to D-glucose 6-phosphate. The active site involves K519.

Belongs to the GPI family. As to quaternary structure, homodimer; in the catalytically active form. Monomer in the secreted form. Post-translationally, phosphorylation at Ser-185 by CK2 has been shown to decrease enzymatic activity and may contribute to secretion by a non-classical secretory pathway. ISGylated.

Its subcellular location is the cytoplasm. The protein resides in the secreted. It carries out the reaction alpha-D-glucose 6-phosphate = beta-D-fructose 6-phosphate. Its pathway is carbohydrate degradation; glycolysis; D-glyceraldehyde 3-phosphate and glycerone phosphate from D-glucose: step 2/4. Functionally, in the cytoplasm, catalyzes the conversion of glucose-6-phosphate to fructose-6-phosphate, the second step in glycolysis, and the reverse reaction during gluconeogenesis. Besides it's role as a glycolytic enzyme, also acts as a secreted cytokine: acts as an angiogenic factor (AMF) that stimulates endothelial cell motility. Acts as a neurotrophic factor, neuroleukin, for spinal and sensory neurons. It is secreted by lectin-stimulated T-cells and induces immunoglobulin secretion. This Bos taurus (Bovine) protein is Glucose-6-phosphate isomerase.